Consider the following 515-residue polypeptide: MTATPKPLVLIILDGFGHSESPDYNAIYAAKKPVWDRLLATQPHGLISGSGMDVGLPDGQMGNSEVGHMNLGAGRVVYQDFTRVTKAIRDGEFFDNPVIASAVDKAVAADKAVHILGLLSPGGVHSHEDHLVAMAQMAARRGAGKIYLHAFLDGRDTPPKSAQPSLERLDATFAGLGKGRIASIIGRYFAMDRDNRWDRVQAAYELIVDGKAEFTADSSVAALEAAYARGESDEFVKATAVVPAGAEAVRVEDGDAVIFMNFRADRARELSRAFVEPAFGEFPRQRAAQLAGFVMLTQYAASIPAPCAFPPEPLTNVLGEYLAKHGKTQLRIAETEKYAHVTFFFSGGREEPYEGEERILIPSPKVATYDLQPEMSAPEVTDRIVEAIEQQRYDVIVVNYANGDMVGHTGVFEAAVKAVECLDTCMGRIVEALDKVGGEALITADHGNVEQMEDESTGQAHTAHTCEPVPFVYVGKRKLSIREGGVLADVAPTMLTLMGLEQPAEMTGRSIVILD.

Mn(2+) is bound by residues aspartate 14 and serine 64. The active-site Phosphoserine intermediate is the serine 64. Residues histidine 125, arginine 155–aspartate 156, arginine 187, arginine 193, arginine 263–arginine 266, and lysine 337 each bind substrate. Positions 404, 408, 445, 446, and 464 each coordinate Mn(2+).

This sequence belongs to the BPG-independent phosphoglycerate mutase family. As to quaternary structure, monomer. It depends on Mn(2+) as a cofactor.

It carries out the reaction (2R)-2-phosphoglycerate = (2R)-3-phosphoglycerate. The protein operates within carbohydrate degradation; glycolysis; pyruvate from D-glyceraldehyde 3-phosphate: step 3/5. Functionally, catalyzes the interconversion of 2-phosphoglycerate and 3-phosphoglycerate. The protein is 2,3-bisphosphoglycerate-independent phosphoglycerate mutase of Pseudomonas paraeruginosa (strain DSM 24068 / PA7) (Pseudomonas aeruginosa (strain PA7)).